The primary structure comprises 126 residues: MAILGLGTDIVEISRIEAVVERTGERLARRILSPSEWQHYQQHQQPVRFLAKRFAVKEAAAKAFGTGIRNGLAFNQFEVVNDALGKPTLRLHSRAAELAVELGVKSLHVTLADERRYACATVIIES.

Mg(2+) is bound by residues Asp-9 and Glu-58.

This sequence belongs to the P-Pant transferase superfamily. AcpS family. The cofactor is Mg(2+).

It is found in the cytoplasm. The catalysed reaction is apo-[ACP] + CoA = holo-[ACP] + adenosine 3',5'-bisphosphate + H(+). Functionally, transfers the 4'-phosphopantetheine moiety from coenzyme A to a Ser of acyl-carrier-protein. The chain is Holo-[acyl-carrier-protein] synthase from Yersinia pseudotuberculosis serotype I (strain IP32953).